We begin with the raw amino-acid sequence, 861 residues long: Leucine--tRNA ligase (861 aa).

The 'HIGH' region signature appears at 42–52 (PYPSGRLHMGH). Residues 619–623 (KMSKS) carry the 'KMSKS' region motif. Lys622 is an ATP binding site.

Belongs to the class-I aminoacyl-tRNA synthetase family.

Its subcellular location is the cytoplasm. It carries out the reaction tRNA(Leu) + L-leucine + ATP = L-leucyl-tRNA(Leu) + AMP + diphosphate. The chain is Leucine--tRNA ligase from Haemophilus influenzae (strain 86-028NP).